A 128-amino-acid chain; its full sequence is Small ribosomal subunit protein eS8 (128 aa).

The protein belongs to the eukaryotic ribosomal protein eS8 family. As to quaternary structure, part of the 30S ribosomal subunit.

This chain is Small ribosomal subunit protein eS8, found in Metallosphaera sedula (strain ATCC 51363 / DSM 5348 / JCM 9185 / NBRC 15509 / TH2).